The primary structure comprises 141 residues: uncharacterized protein (141 aa).

Over residues 1 to 39 (MNNNNNNNNNNNNNNNNNNNNNNNNNSYDSNHSSSSYTS) the composition is skewed to low complexity. Residues 1–48 (MNNNNNNNNNNNNNNNNNNNNNNNNNSYDSNHSSSSYTSENQNREQQF) form a disordered region. A helical membrane pass occupies residues 109-129 (FFCKIILVFICLVAIYSLVVI).

The protein localises to the membrane. This is an uncharacterized protein from Dictyostelium discoideum (Social amoeba).